A 336-amino-acid polypeptide reads, in one-letter code: 4-hydroxy-3-methylbut-2-enyl diphosphate reductase (336 aa).

Position 21 (C21) interacts with [4Fe-4S] cluster. Residues H50 and H86 each contribute to the (2E)-4-hydroxy-3-methylbut-2-enyl diphosphate site. Residues H50 and H86 each contribute to the dimethylallyl diphosphate site. Residues H50 and H86 each contribute to the isopentenyl diphosphate site. A [4Fe-4S] cluster-binding site is contributed by C108. (2E)-4-hydroxy-3-methylbut-2-enyl diphosphate is bound at residue H136. H136 contributes to the dimethylallyl diphosphate binding site. Residue H136 coordinates isopentenyl diphosphate. E138 functions as the Proton donor in the catalytic mechanism. Residue T177 participates in (2E)-4-hydroxy-3-methylbut-2-enyl diphosphate binding. [4Fe-4S] cluster is bound at residue C207. Residues S235, S236, N237, and S280 each coordinate (2E)-4-hydroxy-3-methylbut-2-enyl diphosphate. Dimethylallyl diphosphate-binding residues include S235, S236, N237, and S280. S235, S236, N237, and S280 together coordinate isopentenyl diphosphate.

Belongs to the IspH family. [4Fe-4S] cluster serves as cofactor.

It carries out the reaction isopentenyl diphosphate + 2 oxidized [2Fe-2S]-[ferredoxin] + H2O = (2E)-4-hydroxy-3-methylbut-2-enyl diphosphate + 2 reduced [2Fe-2S]-[ferredoxin] + 2 H(+). The catalysed reaction is dimethylallyl diphosphate + 2 oxidized [2Fe-2S]-[ferredoxin] + H2O = (2E)-4-hydroxy-3-methylbut-2-enyl diphosphate + 2 reduced [2Fe-2S]-[ferredoxin] + 2 H(+). Its pathway is isoprenoid biosynthesis; dimethylallyl diphosphate biosynthesis; dimethylallyl diphosphate from (2E)-4-hydroxy-3-methylbutenyl diphosphate: step 1/1. It functions in the pathway isoprenoid biosynthesis; isopentenyl diphosphate biosynthesis via DXP pathway; isopentenyl diphosphate from 1-deoxy-D-xylulose 5-phosphate: step 6/6. Functionally, catalyzes the conversion of 1-hydroxy-2-methyl-2-(E)-butenyl 4-diphosphate (HMBPP) into a mixture of isopentenyl diphosphate (IPP) and dimethylallyl diphosphate (DMAPP). Acts in the terminal step of the DOXP/MEP pathway for isoprenoid precursor biosynthesis. In Mesorhizobium japonicum (strain LMG 29417 / CECT 9101 / MAFF 303099) (Mesorhizobium loti (strain MAFF 303099)), this protein is 4-hydroxy-3-methylbut-2-enyl diphosphate reductase.